We begin with the raw amino-acid sequence, 314 residues long: Regulator of microtubule dynamics protein 1 (314 aa).

Lys165 is modified (N6-succinyllysine). TPR repeat units follow at residues 168 to 204 (AICL…NPKD) and 222 to 258 (PWYQ…DPNF).

It belongs to the RMDN family. Interacts with microtubules.

The protein localises to the cytoplasm. The protein resides in the cytoskeleton. It is found in the spindle. Its subcellular location is the spindle pole. The protein is Regulator of microtubule dynamics protein 1 (RMDN1) of Homo sapiens (Human).